An 830-amino-acid chain; its full sequence is Adhesion G protein-coupled receptor E2 (830 aa).

The first 22 residues, 1–22, serve as a signal peptide directing secretion; it reads MRHGHPRLLPGLLMLLLLPLGA. At 23–540 the chain is on the extracellular side; the sequence is AAQKTSGCAR…MAHYDVQEED (518 aa). One can recognise an EGF-like 1 domain in the interval 26-68; that stretch reads KTSGCARWCPPKSTCVNATTCRCSPGFSSLSGEIFSSPLESCD. 5 disulfide bridges follow: Cys30–Cys40, Cys34–Cys46, Cys48–Cys67, Cys73–Cys87, and Cys81–Cys96. Asn42 carries an N-linked (GlcNAc...) asparagine glycan. Residues 69–108 enclose the EGF-like 1; calcium-binding domain; sequence DIDECGPPPLVSCGRLADCQNTEGSYHCMCSPGYALASGA. An N-linked (GlcNAc...) asparagine glycan is attached at Asn113. The EGF-like 2; calcium-binding domain occupies 121–159; the sequence is DVDECQLKPRVCKSRGICTNTKGSYTCKCPPGFELNLGD. 6 disulfides stabilise this stretch: Cys125/Cys138, Cys132/Cys147, Cys169/Cys182, Cys176/Cys191, Cys218/Cys231, and Cys225/Cys240. The EGF-like 3; calcium-binding domain maps to 165 to 203; it reads DVNECTSGQNPCHNSTHCLNNIGGYECRCRPGWKPVPGS. A glycan (N-linked (GlcNAc...) asparagine) is linked at Asn178. Residues 214-253 enclose the EGF-like 4; calcium-binding domain; that stretch reads DVDECSSGKHTCHYSTVCINTVGSYKCRCRRGWKPKPRFQ. 4 N-linked (GlcNAc...) asparagine glycosylation sites follow: Asn258, Asn348, Asn361, and Asn379. A GAIN-B domain is found at 358–537; it reads WTFNASAGTD…AVLMAHYDVQ (180 aa). 2 cysteine pairs are disulfide-bonded: Cys489–Cys519 and Cys507–Cys521. Positions 489–537 are GPS; that stretch reads CVFWEHSQDECGHWSTRGCTVVDSGDTSTTCQCTHLSSFAVLMAHYDVQ. A helical membrane pass occupies residues 541–561; the sequence is LVLPVITYVGLGLSLLCLLLA. The Cytoplasmic segment spans residues 562–576; it reads ALTFLLCKAIQNTST. Residues 577-597 traverse the membrane as a helical segment; it reads SLHLQLLICLFLAHLLFLMAI. Residues 598 to 603 are Extracellular-facing; the sequence is DRTEIK. A helical membrane pass occupies residues 604 to 624; sequence VLCSIIAGALHYLYLASFTWM. Topologically, residues 625–651 are cytoplasmic; the sequence is LLEGLHLFLTARNLMVVNYSSVSMLMK. A helical transmembrane segment spans residues 652–672; sequence KLMYPVGYGVPTLIVAISAAS. Over 673-690 the chain is Extracellular; that stretch reads RSHLYGTRTRCWLNPEER. A helical transmembrane segment spans residues 691 to 711; sequence FIWSFLGPVCTIFSVNLGFFL. The Cytoplasmic segment spans residues 712-744; sequence MTLWILKSKLSSLNSDVSTLQNTRMLTFKAIAQ. The chain crosses the membrane as a helical span at residues 745 to 765; the sequence is LFILGCTWCLGILQVGPAAHV. The Extracellular segment spans residues 766–767; it reads MA. Residues 768-788 form a helical membrane-spanning segment; it reads YLFTIINSLQGVFIFLVYCLL. At 789 to 830 the chain is on the cytoplasmic side; the sequence is SQQVREEYGKWFKGIRKTRAESEKYTLSSRAMSDVNKPMMVN.

The protein belongs to the G-protein coupled receptor 2 family. Adhesion G-protein coupled receptor (ADGR) subfamily. Forms a heterodimer, consisting of a large extracellular region non-covalently linked to a seven-transmembrane moiety. Interacts with chondroitin sulfate; the interaction with chondroitin sulfate is calcium-dependent. Interacts with CD55. In terms of processing, autoproteolytically cleaved into 2 subunits, an extracellular alpha subunit and a seven-transmembrane beta subunit.

Its subcellular location is the cell membrane. The protein localises to the cell projection. It localises to the ruffle membrane. Its function is as follows. Cell surface receptor that binds to the chondroitin sulfate moiety of glycosaminoglycan chains and promotes cell attachment. Promotes granulocyte chemotaxis, degranulation and adhesion. In macrophages, promotes the release of inflammatory cytokines, including IL8 and TNF. Signals probably through G-proteins. This Canis lupus familiaris (Dog) protein is Adhesion G protein-coupled receptor E2 (ADGRE2).